Here is a 416-residue protein sequence, read N- to C-terminus: Fusaric acid cluster transcription factor FUB10 (416 aa).

A DNA-binding region (zn(2)-C6 fungal-type) is located at residues 16-47 (CDRCRAQKLRCHRDSGHSTDACLRCLKSGIEC). The tract at residues 50-92 (SKARPTGRPPSRQVQPTVSVEQGDTSSSSHTTDSSPSAGGTDI) is disordered. Positions 61–73 (RQVQPTVSVEQGD) are enriched in polar residues. Low complexity predominate over residues 74-86 (TSSSSHTTDSSPS).

The protein localises to the nucleus. In terms of biological role, transcription factor that regulates the expression of the gene cluster that mediates the biosynthesis of fusaric acid, a mycotoxin with low to moderate toxicity to animals and humans, but with high phytotoxic properties. The protein is Fusaric acid cluster transcription factor FUB10 of Fusarium oxysporum f. sp. lycopersici (strain 4287 / CBS 123668 / FGSC 9935 / NRRL 34936) (Fusarium vascular wilt of tomato).